We begin with the raw amino-acid sequence, 210 residues long: Translation initiation factor IF-3 (210 aa).

Positions 169–210 (APKQAPAPKKERTEESAEKAGSAGETEPVPAASAAAEAPANV) are disordered. Residues 176-186 (PKKERTEESAE) are compositionally biased toward basic and acidic residues. Over residues 187 to 210 (KAGSAGETEPVPAASAAAEAPANV) the composition is skewed to low complexity.

The protein belongs to the IF-3 family. Monomer.

Its subcellular location is the cytoplasm. Its function is as follows. IF-3 binds to the 30S ribosomal subunit and shifts the equilibrium between 70S ribosomes and their 50S and 30S subunits in favor of the free subunits, thus enhancing the availability of 30S subunits on which protein synthesis initiation begins. This chain is Translation initiation factor IF-3, found in Deinococcus deserti (strain DSM 17065 / CIP 109153 / LMG 22923 / VCD115).